The primary structure comprises 357 residues: MATANLLDLNGRREMDKAKALESALAQIERQFGKGSIMKLGANSPVMEIEATSTGSLGLDIALGIGGLPKGRIIEIYGPESSGKTTLTLHVVAEEQKKGGVCAFVDAEHALDPQYAKKLGVNLDELLISQPDTGEQALEIVDTLVRSGAVNLIVVDSVAALTPKSEIEGDMGDMQMGSQARLMSQAMRKLTASIGRSNCMVIFINQIRMKIGVMFGNPETTTGGNALKFYASVRLDIRRTGAIKDRDNVIGNTTKVKVVKNKVAPPFREVEFDIMYGEGISKTGELVDLGVKAGVVEKSGSWYSYGDERIGQGRENAKAFLRANPTVAGDIEDRIRASHGLDFSTGEDGKGDDLVDM.

Position 78-85 (78-85 (GPESSGKT)) interacts with ATP.

It belongs to the RecA family.

It is found in the cytoplasm. Its function is as follows. Can catalyze the hydrolysis of ATP in the presence of single-stranded DNA, the ATP-dependent uptake of single-stranded DNA by duplex DNA, and the ATP-dependent hybridization of homologous single-stranded DNAs. It interacts with LexA causing its activation and leading to its autocatalytic cleavage. This chain is Protein RecA, found in Cereibacter sphaeroides (strain ATCC 17029 / ATH 2.4.9) (Rhodobacter sphaeroides).